The chain runs to 116 residues: NAD(P)H-quinone oxidoreductase subunit M (116 aa).

It belongs to the complex I NdhM subunit family. In terms of assembly, NDH-1 can be composed of about 15 different subunits; different subcomplexes with different compositions have been identified which probably have different functions.

It localises to the cellular thylakoid membrane. It catalyses the reaction a plastoquinone + NADH + (n+1) H(+)(in) = a plastoquinol + NAD(+) + n H(+)(out). The enzyme catalyses a plastoquinone + NADPH + (n+1) H(+)(in) = a plastoquinol + NADP(+) + n H(+)(out). Functionally, NDH-1 shuttles electrons from an unknown electron donor, via FMN and iron-sulfur (Fe-S) centers, to quinones in the respiratory and/or the photosynthetic chain. The immediate electron acceptor for the enzyme in this species is believed to be plastoquinone. Couples the redox reaction to proton translocation, and thus conserves the redox energy in a proton gradient. Cyanobacterial NDH-1 also plays a role in inorganic carbon-concentration. The protein is NAD(P)H-quinone oxidoreductase subunit M of Synechococcus sp. (strain RCC307).